Consider the following 189-residue polypeptide: Elongation factor P (189 aa).

Lys-34 carries the N6-(3,6-diaminohexanoyl)-5-hydroxylysine modification.

The protein belongs to the elongation factor P family. May be beta-lysylated on the epsilon-amino group of Lys-34 by the combined action of EpmA and EpmB, and then hydroxylated on the C5 position of the same residue by EpmC (if this protein is present). Lysylation is critical for the stimulatory effect of EF-P on peptide-bond formation. The lysylation moiety may extend toward the peptidyltransferase center and stabilize the terminal 3-CCA end of the tRNA. Hydroxylation of the C5 position on Lys-34 may allow additional potential stabilizing hydrogen-bond interactions with the P-tRNA.

The protein resides in the cytoplasm. The protein operates within protein biosynthesis; polypeptide chain elongation. Functionally, involved in peptide bond synthesis. Alleviates ribosome stalling that occurs when 3 or more consecutive Pro residues or the sequence PPG is present in a protein, possibly by augmenting the peptidyl transferase activity of the ribosome. Modification of Lys-34 is required for alleviation. This Teredinibacter turnerae (strain ATCC 39867 / T7901) protein is Elongation factor P.